An 87-amino-acid chain; its full sequence is Phosphocarrier protein HPr (87 aa).

Residues 1 to 87 enclose the HPr domain; sequence MASKDFHIVA…AETMTKEGLA (87 aa). Histidine 15 functions as the Pros-phosphohistidine intermediate in the catalytic mechanism. At serine 46 the chain carries Phosphoserine; by HPrK/P.

The protein belongs to the HPr family.

The protein resides in the cytoplasm. Phosphorylation on Ser-46 inhibits the phosphoryl transfer from enzyme I to HPr. General (non sugar-specific) component of the phosphoenolpyruvate-dependent sugar phosphotransferase system (sugar PTS). This major carbohydrate active-transport system catalyzes the phosphorylation of incoming sugar substrates concomitantly with their translocation across the cell membrane. The phosphoryl group from phosphoenolpyruvate (PEP) is transferred to the phosphoryl carrier protein HPr by enzyme I. Phospho-HPr then transfers it to the PTS EIIA domain. Its function is as follows. P-Ser-HPr interacts with the catabolite control protein A (CcpA), forming a complex that binds to DNA at the catabolite response elements cre, operator sites preceding a large number of catabolite-regulated genes. Thus, P-Ser-HPr is a corepressor in carbon catabolite repression (CCR), a mechanism that allows bacteria to coordinate and optimize the utilization of available carbon sources. P-Ser-HPr also plays a role in inducer exclusion, in which it probably interacts with several non-PTS permeases and inhibits their transport activity. In Streptococcus salivarius, this protein is Phosphocarrier protein HPr (ptsH).